The primary structure comprises 636 residues: 1-deoxy-D-xylulose-5-phosphate synthase (636 aa).

Thiamine diphosphate-binding positions include histidine 72 and glycine 113–alanine 115. Aspartate 144 provides a ligand contact to Mg(2+). Thiamine diphosphate contacts are provided by residues glycine 145–alanine 146, asparagine 174, tyrosine 287, and glutamate 370. Asparagine 174 lines the Mg(2+) pocket.

This sequence belongs to the transketolase family. DXPS subfamily. Homodimer. The cofactor is Mg(2+). It depends on thiamine diphosphate as a cofactor.

It carries out the reaction D-glyceraldehyde 3-phosphate + pyruvate + H(+) = 1-deoxy-D-xylulose 5-phosphate + CO2. The protein operates within metabolic intermediate biosynthesis; 1-deoxy-D-xylulose 5-phosphate biosynthesis; 1-deoxy-D-xylulose 5-phosphate from D-glyceraldehyde 3-phosphate and pyruvate: step 1/1. Its function is as follows. Catalyzes the acyloin condensation reaction between C atoms 2 and 3 of pyruvate and glyceraldehyde 3-phosphate to yield 1-deoxy-D-xylulose-5-phosphate (DXP). The chain is 1-deoxy-D-xylulose-5-phosphate synthase from Crocosphaera subtropica (strain ATCC 51142 / BH68) (Cyanothece sp. (strain ATCC 51142)).